The sequence spans 548 residues: Probable inorganic phosphate transporter 1-5 (548 aa).

Residues 1–23 (MVQDRKVLDALDTAKTQWYHFTA) are Cytoplasmic-facing. A helical membrane pass occupies residues 24 to 44 (VVIAGMGFFTDAYDLFSISLV). The Extracellular portion of the chain corresponds to 45 to 69 (TKLLGRIYYFNPASKSPGSLPPNVS). Residues 70–90 (AAVNGVAFCGTLAGQLFFGWL) form a helical membrane-spanning segment. The Cytoplasmic portion of the chain corresponds to 91-98 (GDKMGRKK). A helical transmembrane segment spans residues 99–119 (VYGMTLMLMVICCLASGLSFG). Over 120–123 (SSAK) the chain is Extracellular. A helical transmembrane segment spans residues 124 to 144 (GVMATLCFFRFWLGFGIGGDY). The Cytoplasmic portion of the chain corresponds to 145 to 163 (PLSATIMSEYANKRTRGAF). The chain crosses the membrane as a helical span at residues 164 to 184 (IAAVFAMQGFGNLTGGIVAII). The Extracellular segment spans residues 185–210 (VSAAFKLRFDAPAYRDDRAGSTVPQA). Residues 211–231 (DYAWRIVLMFGAIPALLTYYW) traverse the membrane as a helical segment. Over 232 to 303 (RMKMPETARY…REFARRHGHH (72 aa)) the chain is Cytoplasmic. A helical membrane pass occupies residues 304-324 (LLGTTVCWFVLDIAYYSQNLF). Over 325 to 355 (QKDIYTAVQWLPKADTMSALEEMFKISRAQT) the chain is Extracellular. A helical membrane pass occupies residues 356 to 376 (LVALCGTIPGYWFTVLFIDIV). At 377–378 (GR) the chain is on the cytoplasmic side. The chain crosses the membrane as a helical span at residues 379 to 399 (FAIQLGGFFLMTAFMLGLAVP). Residues 400–405 (YHHWTT) are Extracellular-facing. Residues 406–426 (PGNHVGFVVMYAFTFFFANFG) traverse the membrane as a helical segment. Residues 427 to 449 (PNSTTFIVPAEIFPARLRSTCHG) are Cytoplasmic-facing. A helical transmembrane segment spans residues 450–470 (ISSAAGKMGAIVGSFGFLYAA). Over 471–490 (QSTDPSKTDAGYPRGIGVRN) the chain is Extracellular. A helical membrane pass occupies residues 491–511 (SLFLLAGCNVVGFLFTFLVPE). At 512-548 (SKGKSLEELSGENEMEAEPAAATNSYRQTVPDSGQSE) the chain is on the cytoplasmic side. The segment at 518–548 (EELSGENEMEAEPAAATNSYRQTVPDSGQSE) is disordered. The segment covering 533-548 (ATNSYRQTVPDSGQSE) has biased composition (polar residues).

Belongs to the major facilitator superfamily. Phosphate:H(+) symporter (TC 2.A.1.9) family. Expressed at low levels in roots.

The protein localises to the membrane. High-affinity transporter for external inorganic phosphate. The sequence is that of Probable inorganic phosphate transporter 1-5 (PHT1-5) from Oryza sativa subsp. japonica (Rice).